Reading from the N-terminus, the 246-residue chain is Pyridoxine 5'-phosphate synthase (246 aa).

Asn-7 provides a ligand contact to 3-amino-2-oxopropyl phosphate. Residue Asp-9 to His-10 coordinates 1-deoxy-D-xylulose 5-phosphate. Arg-18 is a 3-amino-2-oxopropyl phosphate binding site. His-43 acts as the Proton acceptor in catalysis. 1-deoxy-D-xylulose 5-phosphate is bound by residues Arg-45 and His-50. The active-site Proton acceptor is the Glu-70. Thr-100 is a 1-deoxy-D-xylulose 5-phosphate binding site. Catalysis depends on His-190, which acts as the Proton donor. Residues Gly-191 and Gly-212–His-213 contribute to the 3-amino-2-oxopropyl phosphate site.

It belongs to the PNP synthase family. As to quaternary structure, homooctamer; tetramer of dimers.

It is found in the cytoplasm. It carries out the reaction 3-amino-2-oxopropyl phosphate + 1-deoxy-D-xylulose 5-phosphate = pyridoxine 5'-phosphate + phosphate + 2 H2O + H(+). The protein operates within cofactor biosynthesis; pyridoxine 5'-phosphate biosynthesis; pyridoxine 5'-phosphate from D-erythrose 4-phosphate: step 5/5. In terms of biological role, catalyzes the complicated ring closure reaction between the two acyclic compounds 1-deoxy-D-xylulose-5-phosphate (DXP) and 3-amino-2-oxopropyl phosphate (1-amino-acetone-3-phosphate or AAP) to form pyridoxine 5'-phosphate (PNP) and inorganic phosphate. The chain is Pyridoxine 5'-phosphate synthase from Prochlorococcus marinus (strain SARG / CCMP1375 / SS120).